The chain runs to 222 residues: Peptide methionine sulfoxide reductase MsrA 1 (222 aa).

The active site involves Cys57.

It belongs to the MsrA Met sulfoxide reductase family.

The catalysed reaction is L-methionyl-[protein] + [thioredoxin]-disulfide + H2O = L-methionyl-(S)-S-oxide-[protein] + [thioredoxin]-dithiol. The enzyme catalyses [thioredoxin]-disulfide + L-methionine + H2O = L-methionine (S)-S-oxide + [thioredoxin]-dithiol. Its function is as follows. Has an important function as a repair enzyme for proteins that have been inactivated by oxidation. Catalyzes the reversible oxidation-reduction of methionine sulfoxide in proteins to methionine. This Synechocystis sp. (strain ATCC 27184 / PCC 6803 / Kazusa) protein is Peptide methionine sulfoxide reductase MsrA 1 (msrA1).